Here is a 139-residue protein sequence, read N- to C-terminus: Large ribosomal subunit protein uL16 (139 aa).

The protein belongs to the universal ribosomal protein uL16 family. In terms of assembly, part of the 50S ribosomal subunit.

In terms of biological role, binds 23S rRNA and is also seen to make contacts with the A and possibly P site tRNAs. In Treponema pallidum (strain Nichols), this protein is Large ribosomal subunit protein uL16.